A 430-amino-acid polypeptide reads, in one-letter code: Protein arginine methyltransferase NDUFAF7, mitochondrial (430 aa).

Residues 1-31 constitute a mitochondrion transit peptide; the sequence is MSGLARLRKTAFLMVSASANCRIQRYQSSRT.

This sequence belongs to the NDUFAF7 family.

It is found in the mitochondrion. The enzyme catalyses L-arginyl-[protein] + 2 S-adenosyl-L-methionine = N(omega),N(omega)'-dimethyl-L-arginyl-[protein] + 2 S-adenosyl-L-homocysteine + 2 H(+). In terms of biological role, arginine methyltransferase involved in the assembly or stability of mitochondrial NADH:ubiquinone oxidoreductase complex (complex I). Acts by mediating symmetric dimethylation of 'Arg-118' of ndufs2 after it assembles into the complex I, stabilizing the early intermediate complex. This is Protein arginine methyltransferase NDUFAF7, mitochondrial from Xenopus tropicalis (Western clawed frog).